The chain runs to 836 residues: Zinc fingers and homeoboxes protein 2 (836 aa).

Positions 24 to 58 are disordered; the sequence is LEEADRAKDKGLGVPPSDVSKERWAAEPEPSSKES. The tract at residues 27–77 is interaction with EFNB1; that stretch reads ADRAKDKGLGVPPSDVSKERWAAEPEPSSKESEVVEVRSVGESQSKKLQGG. The span at 42–58 shows a compositional bias: basic and acidic residues; that stretch reads VSKERWAAEPEPSSKES. 2 C2H2-type zinc fingers span residues 78–101 and 110–133; these read YECK…DMQH and YVCA…SKFH. The disordered stretch occupies residues 168-210; the sequence is SAPGSSDNDPGVSVGKTATVKTGKQKADAKKVPKKPDEAAPDN. The span at 192–210 shows a compositional bias: basic and acidic residues; the sequence is QKADAKKVPKKPDEAAPDN. The interval 195–358 is required for homodimerization; sequence DAKKVPKKPD…PAQLTPTKVS (164 aa). DNA-binding regions (homeobox) lie at residues 263 to 324, 439 to 501, 530 to 591, and 628 to 690; these read NTTK…WSPE, TPAS…IVHI, AQKF…EQAV, and SPSS…TLSW. A required for repressor activity region spans residues 263-446; sequence NTTKYNSALD…PLTPASDRKK (184 aa). The segment at 263-497 is required for interaction with NFYA; the sequence is NTTKYNSALD…SDHRYRCQRG (235 aa). The tract at residues 317–446 is required for nuclear localization; that stretch reads HGISWSPEEV…PLTPASDRKK (130 aa). The interval 404–442 is disordered; sequence GQKRPLVTPQAAPEPKRPHIAQVPEPPPKVANTPLTPAS. Residue Lys455 forms a Glycyl lysine isopeptide (Lys-Gly) (interchain with G-Cter in SUMO2) linkage. 2 stretches are compositionally biased toward basic and acidic residues: residues 700-709 and 730-746; these read SDDHGHDVAS and YAKD…EKLV. The tract at residues 700 to 836 is disordered; the sequence is SDDHGHDVAS…DSTPAEAGQA (137 aa). A phosphoserine mark is found at Ser824 and Ser826.

Belongs to the ZHX family. As to quaternary structure, homodimer (via homeobox domain 1). Heterodimer with ZHX1 (via homeobox domain 1). Heterodimer with ZHX3 (via homeobox domain 1). Heterodimerization with ZHX1 is not necessary for repressor activity. Interacts (via homeobox domain) with NFYA (via N-terminus). Interacts with EFNB1 intracellular domain peptide; the interaction enhances ZHX2 transcriptional repression activity.

It is found in the nucleus. Acts as a transcriptional repressor. Represses the promoter activity of the CDC25C gene stimulated by NFYA. May play a role in retinal development where it regulates the composition of bipolar cell populations, by promoting differentiation of bipolar OFF-type cells. In the brain, may promote maintenance and suppress differentiation of neural progenitor cells in the developing cortex. This chain is Zinc fingers and homeoboxes protein 2 (Zhx2), found in Rattus norvegicus (Rat).